A 98-amino-acid polypeptide reads, in one-letter code: R.appendiculatus Kunitz/BPTI-like protein (98 aa).

Residues 1–23 (MASTLKLFMLLPVILLLLQEAYG) form the signal peptide. Intrachain disulfides connect C36/C51, C43/C83, C49/C96, and C74/C92.

In terms of assembly, monomer. In terms of tissue distribution, expressed in salivary glands.

Its subcellular location is the secreted. Its function is as follows. Activates large conductance calcium-activated potassium channels (maxiK, KCNMA1/KCNMB), when tested at micromolar concentrations, suggesting a potential mechanism for regulating host blood supply during feeding. Shows no antiprotease activity, and does not prevent ADP-, PAF- or collagen-induced platelet aggregation. Has no effect on blood coagulation and does not inhibit the alternative or classical complement cascades. The sequence is that of R.appendiculatus Kunitz/BPTI-like protein from Rhipicephalus appendiculatus (Brown ear tick).